Consider the following 61-residue polypeptide: Sec-independent protein translocase protein TatA (61 aa).

A helical membrane pass occupies residues 2–22 (GLSGISPLSLLLILAIIVALF).

The protein belongs to the TatA/E family. As to quaternary structure, the Tat system comprises two distinct complexes: a TatABC complex, containing multiple copies of TatA, TatB and TatC subunits, and a separate TatA complex, containing only TatA subunits. Substrates initially bind to the TatABC complex, which probably triggers association of the separate TatA complex to form the active translocon.

It is found in the cell inner membrane. In terms of biological role, part of the twin-arginine translocation (Tat) system that transports large folded proteins containing a characteristic twin-arginine motif in their signal peptide across membranes. TatA could form the protein-conducting channel of the Tat system. This Legionella pneumophila (strain Paris) protein is Sec-independent protein translocase protein TatA.